Consider the following 359-residue polypeptide: Peptide chain release factor 1 (359 aa).

Gln233 bears the N5-methylglutamine mark.

It belongs to the prokaryotic/mitochondrial release factor family. Post-translationally, methylated by PrmC. Methylation increases the termination efficiency of RF1.

It is found in the cytoplasm. Functionally, peptide chain release factor 1 directs the termination of translation in response to the peptide chain termination codons UAG and UAA. This chain is Peptide chain release factor 1, found in Orientia tsutsugamushi (strain Boryong) (Rickettsia tsutsugamushi).